A 475-amino-acid polypeptide reads, in one-letter code: Protein ABCI7, chloroplastic (475 aa).

The N-terminal 36 residues, 1 to 36 (MAAATVLGRLSLIPNLSSKPKLKSNRRTTSTSVSVR), are a transit peptide targeting the chloroplast.

As to quaternary structure, interacts with NAP7.

It is found in the plastid. The protein resides in the chloroplast. The protein is Protein ABCI7, chloroplastic (ABCI7) of Arabidopsis thaliana (Mouse-ear cress).